The following is a 664-amino-acid chain: UvrABC system protein B (664 aa).

A Helicase ATP-binding domain is found at 23-180; sequence EGLNRGMRFQ…ERLARIGYQR (158 aa). 36–43 lines the ATP pocket; it reads GVTGSGKT. Positions 89–112 match the Beta-hairpin motif; it reads YYDYYQPEAYIPTKDLYIEKNADI. The Helicase C-terminal domain maps to 429–588; it reads DLVNEIVKVK…ITPRSVIKPL (160 aa). Residues 622-657 enclose the UVR domain; sequence EEYMAVLEEEMYRAASELRYEDAAALRDELFRIREE.

The protein belongs to the UvrB family. Forms a heterotetramer with UvrA during the search for lesions. Interacts with UvrC in an incision complex.

The protein resides in the cytoplasm. Functionally, the UvrABC repair system catalyzes the recognition and processing of DNA lesions. A damage recognition complex composed of 2 UvrA and 2 UvrB subunits scans DNA for abnormalities. Upon binding of the UvrA(2)B(2) complex to a putative damaged site, the DNA wraps around one UvrB monomer. DNA wrap is dependent on ATP binding by UvrB and probably causes local melting of the DNA helix, facilitating insertion of UvrB beta-hairpin between the DNA strands. Then UvrB probes one DNA strand for the presence of a lesion. If a lesion is found the UvrA subunits dissociate and the UvrB-DNA preincision complex is formed. This complex is subsequently bound by UvrC and the second UvrB is released. If no lesion is found, the DNA wraps around the other UvrB subunit that will check the other stand for damage. The protein is UvrABC system protein B of Thermotoga petrophila (strain ATCC BAA-488 / DSM 13995 / JCM 10881 / RKU-1).